We begin with the raw amino-acid sequence, 239 residues long: Fatty acid metabolism regulator protein (239 aa).

Residues 6–74 (QSPAGFAEEY…HGKPTKVNNF (69 aa)) form the HTH gntR-type domain. The H-T-H motif DNA-binding region spans 34 to 53 (ERELSELIGVTRTTLREVLQ).

As to quaternary structure, homodimer.

It localises to the cytoplasm. Its function is as follows. Multifunctional regulator of fatty acid metabolism. This Yersinia enterocolitica serotype O:8 / biotype 1B (strain NCTC 13174 / 8081) protein is Fatty acid metabolism regulator protein.